The sequence spans 101 residues: Large ribosomal subunit protein uL23 (101 aa).

This sequence belongs to the universal ribosomal protein uL23 family. Part of the 50S ribosomal subunit. Contacts protein L29, and trigger factor when it is bound to the ribosome.

In terms of biological role, one of the early assembly proteins it binds 23S rRNA. One of the proteins that surrounds the polypeptide exit tunnel on the outside of the ribosome. Forms the main docking site for trigger factor binding to the ribosome. This is Large ribosomal subunit protein uL23 from Azoarcus sp. (strain BH72).